We begin with the raw amino-acid sequence, 1391 residues long: ESX-5 secretion system protein EccC5 (1391 aa).

2 helical membrane passes run 38 to 58 (WLIV…AMVF) and 65 to 85 (FGGI…MMMF). FtsK domains lie at 476–678 (GELL…GAAQ), 858–1052 (QPPW…EDAK), and 1161–1354 (LAPV…DPDE). Residues 499–506 (GTTGSGKS), 876–883 (GAGGSGKT), and 1178–1185 (GRRECGRT) each bind ATP.

As to quaternary structure, part of the ESX-5 / type VII secretion system (T7SS), which is composed of cytosolic and membrane components. The ESX-5 membrane complex is composed of EccB5, EccC5, EccD5 and EccE5.

The protein localises to the cell inner membrane. Part of the ESX-5 specialized secretion system, which is responsible for the secretion of EsxN and a number of PE_PGRS and PPE proteins, including PPE41. The sequence is that of ESX-5 secretion system protein EccC5 from Mycobacterium tuberculosis (strain CDC 1551 / Oshkosh).